A 353-amino-acid polypeptide reads, in one-letter code: 11-beta-hydroxysteroid dehydrogenase B (353 aa).

A helical; Signal-anchor for type II membrane protein transmembrane segment spans residues 10–30; that stretch reads LFVPPASLITLAFSWPALCFP. The Proline-knob signature appears at 13-26; it reads PPASLITLAFSWPA. NADP(+) contacts are provided by residues 54–80 and D105; that span reads GASSGIGEQIAYEYALRRACLVLVARR. Substrate is bound at residue S184. Y197 acts as the Proton acceptor in catalysis. NADP(+)-binding positions include 197–201 and K201; that span reads YAAAK.

The protein belongs to the short-chain dehydrogenases/reductases (SDR) family. In terms of tissue distribution, expressed in seeds (at protein level).

Its subcellular location is the lipid droplet. It localises to the membrane. The catalysed reaction is an 11beta-hydroxysteroid + NADP(+) = an 11-oxosteroid + NADPH + H(+). Functionally, has dehydrogenase activity against 11 beta-hydroxysteroid and 17 beta-hydroxysteroid. May be involved in signal transduction regulated by various sterols. This chain is 11-beta-hydroxysteroid dehydrogenase B, found in Arachis hypogaea (Peanut).